Consider the following 353-residue polypeptide: Heterogeneous nuclear ribonucleoproteins A2/B1 (353 aa).

Methionine 1 carries the post-translational modification N-acetylmethionine. Threonine 4 bears the Phosphothreonine mark. The Nuclear localization signal signature appears at 9–15 (PLERKKR). 2 RRM domains span residues 21–104 (RKLF…ESGK) and 112–191 (KKLF…LSRQ). A Glycyl lysine isopeptide (Lys-Gly) (interchain with G-Cter in SUMO2) cross-link involves residue lysine 22. Serine 29 carries the phosphoserine modification. At arginine 38 the chain carries Omega-N-methylarginine. Serine 85 is subject to Phosphoserine. Lysine 104 bears the N6,N6-dimethyllysine; alternate mark. A Glycyl lysine isopeptide (Lys-Gly) (interchain with G-Cter in SUMO2); alternate cross-link involves residue lysine 104. Glycyl lysine isopeptide (Lys-Gly) (interchain with G-Cter in SUMO2) cross-links involve residues lysine 112, lysine 120, and lysine 137. Threonine 140 is modified (phosphothreonine). Serine 149 is modified (phosphoserine). Residue lysine 152 forms a Glycyl lysine isopeptide (Lys-Gly) (interchain with G-Cter in SUMO2) linkage. Phosphothreonine is present on threonine 159. Residues lysine 168 and lysine 173 each participate in a glycyl lysine isopeptide (Lys-Gly) (interchain with G-Cter in SUMO2); alternate cross-link. Residues lysine 168 and lysine 173 each carry the N6-acetyllysine; alternate modification. The residue at position 176 (threonine 176) is a Phosphothreonine. Lysine 186 is covalently cross-linked (Glycyl lysine isopeptide (Lys-Gly) (interchain with G-Cter in SUMO2)). Residues serine 189 and serine 201 each carry the phosphoserine modification. The disordered stretch occupies residues 193-353 (MQEVQSSRSG…SGGYGGRSRY (161 aa)). Residues 202 to 223 (GRGGNFGFGDSRGGGGNFGPGP) show a composition bias toward gly residues. Arginine 203 bears the Asymmetric dimethylarginine; alternate mark. Arginine 203 carries the dimethylated arginine; alternate modification. Arginine 203 bears the Omega-N-methylarginine; alternate mark. Phosphoserine is present on serine 212. Arginine 213 carries the asymmetric dimethylarginine; alternate modification. Residue arginine 213 is modified to Dimethylated arginine; alternate. Arginine 213 carries the omega-N-methylarginine; alternate modification. Serine 225 bears the Phosphoserine mark. Arginine 228 is modified (omega-N-methylarginine). 2 positions are modified to phosphoserine: serine 231 and serine 236. Arginine 238 carries the omega-N-methylarginine modification. Phosphoserine is present on serine 259. Arginine 266 carries the post-translational modification Asymmetric dimethylarginine; alternate. Arginine 266 is subject to Omega-N-methylarginine; alternate. Residues 308-347 (QQPSNYGPMKSGNFGGSRNMGGPYGGGNYGPGGSGGSGGY) form a nuclear targeting sequence region. The segment covering 320–353 (NFGGSRNMGGPYGGGNYGPGGSGGSGGYGGRSRY) has biased composition (gly residues). Serine 324 carries the post-translational modification Phosphoserine. Residue arginine 325 is modified to Omega-N-methylarginine. Residue tyrosine 331 is modified to Phosphotyrosine. Serine 341 and serine 344 each carry phosphoserine. A Phosphotyrosine modification is found at tyrosine 347. Arginine 350 is modified (omega-N-methylarginine).

Identified in the spliceosome C complex. Identified in a IGF2BP1-dependent mRNP granule complex containing untranslated mRNAs. Interacts with IGF2BP1. Interacts with C9orf72. Interacts with DGCR8. Interacts with TARDBP. Interacts with CKAP5. Interacts with PPIA/CYPA. Interacts (via C-terminus) with FAM76B; the interaction results in retention of HNRNPA2B1 in the nucleus and inhibition of the NF-kappa-B-mediated inflammatory pathway. Interacts with NF-kappa-B inhibitors NFKBIA and NFKBIE; the interaction may be mediated by the RRM2 domain of HNRNPA2B1, and HNRNPA2B1 may interact simultaneously with FAM76B and either NFKBIA or NFKBIE to form a complex. Post-translationally, sumoylated in exosomes, promoting miRNAs-binding. Asymmetric dimethylation at Arg-266 constitutes the major methylation site. According to a report, methylation affects subcellular location and promotes nuclear localization. According to another report, methylation at Arg-266 does not influence nucleocytoplasmic shuttling.

The protein resides in the nucleus. Its subcellular location is the nucleoplasm. It localises to the cytoplasmic granule. It is found in the secreted. The protein localises to the extracellular exosome. Its function is as follows. Heterogeneous nuclear ribonucleoprotein (hnRNP) that associates with nascent pre-mRNAs, packaging them into hnRNP particles. The hnRNP particle arrangement on nascent hnRNA is non-random and sequence-dependent and serves to condense and stabilize the transcripts and minimize tangling and knotting. Packaging plays a role in various processes such as transcription, pre-mRNA processing, RNA nuclear export, subcellular location, mRNA translation and stability of mature mRNAs. Forms hnRNP particles with at least 20 other different hnRNP and heterogeneous nuclear RNA in the nucleus. Involved in transport of specific mRNAs to the cytoplasm in oligodendrocytes and neurons: acts by specifically recognizing and binding the A2RE (21 nucleotide hnRNP A2 response element) or the A2RE11 (derivative 11 nucleotide oligonucleotide) sequence motifs present on some mRNAs, and promotes their transport to the cytoplasm. Specifically binds single-stranded telomeric DNA sequences, protecting telomeric DNA repeat against endonuclease digestion. Also binds other RNA molecules, such as primary miRNA (pri-miRNAs): acts as a nuclear 'reader' of the N6-methyladenosine (m6A) mark by specifically recognizing and binding a subset of nuclear m6A-containing pri-miRNAs. Binding to m6A-containing pri-miRNAs promotes pri-miRNA processing by enhancing binding of DGCR8 to pri-miRNA transcripts. Involved in miRNA sorting into exosomes following sumoylation, possibly by binding (m6A)-containing pre-miRNAs. Acts as a regulator of efficiency of mRNA splicing, possibly by binding to m6A-containing pre-mRNAs. Plays a role in the splicing of pyruvate kinase PKM by binding repressively to sequences flanking PKM exon 9, inhibiting exon 9 inclusion and resulting in exon 10 inclusion and production of the PKM M2 isoform. The polypeptide is Heterogeneous nuclear ribonucleoproteins A2/B1 (HNRNPA2B1) (Pongo abelii (Sumatran orangutan)).